A 620-amino-acid polypeptide reads, in one-letter code: Guanylate-binding protein 3 (620 aa).

A GTPase domain (Globular) region spans residues methionine 1 to cysteine 304. The GB1/RHD3-type G domain occupies alanine 29–lysine 271. Residues glycine 39–serine 46, leucine 61–serine 63, and aspartate 91–leucine 95 each bind GTP. Coiled coils occupy residues lysine 375–leucine 411 and aspartate 477–lysine 582.

This sequence belongs to the TRAFAC class dynamin-like GTPase superfamily. GB1/RHD3 GTPase family. GB1 subfamily. In terms of assembly, heterodimer with other family members, including GBP1, GBP2 and GBP5. Dimerization regulates subcellular location. In terms of tissue distribution, brain, lung, heart, spleen, kidney, liver and intestine.

It is found in the cytoplasm. It localises to the perinuclear region. The protein resides in the golgi apparatus membrane. It catalyses the reaction GTP + H2O = GDP + phosphate + H(+). Interferon (IFN)-inducible GTPase that plays important roles in innate immunity against a diverse range of bacterial, viral and protozoan pathogens. Hydrolyzes GTP very efficiently; GDP rather than GMP is the major reaction product. Following infection, recruited to the pathogen-containing vacuoles or vacuole-escaped bacteria and acts as a positive regulator of inflammasome assembly by promoting the release of inflammasome ligands from bacteria. Acts by promoting lysis of pathogen-containing vacuoles, releasing pathogens into the cytosol. Following pathogen release in the cytosol, promotes recruitment of proteins that mediate bacterial cytolysis, such as Gm12250/Irgb10: this liberates ligands that are detected by inflammasomes, such as lipopolysaccharide (LPS) that activates the non-canonical CASP4/CASP11 inflammasome or double-stranded DNA (dsDNA) that activates the AIM2 inflammasome. May play a role in erythroid differentiation. The sequence is that of Guanylate-binding protein 3 from Mus musculus (Mouse).